We begin with the raw amino-acid sequence, 80 residues long: MSKVLKVGLLLLLVAVAASAYAVAEENGAPKENKQLPQIDDYGVTNKCPANQPFKWNCNYCTCGPEGKDASCTRMACPQH.

Residues 1 to 24 (MSKVLKVGLLLLLVAVAASAYAVA) form the signal peptide. The propeptide occupies 25 to 47 (EENGAPKENKQLPQIDDYGVTNK). The Pacifastin domain occupies 45–80 (TNKCPANQPFKWNCNYCTCGPEGKDASCTRMACPQH). Cystine bridges form between Cys48–Cys63, Cys58–Cys77, and Cys61–Cys72.

It belongs to the protease inhibitor I19 family. In terms of tissue distribution, expressed in the venom apparatus. Low transcript levels are also detected in other tissues.

Its subcellular location is the secreted. Functionally, parasitic wasp protein that may interfere with the host immune response. The recombinant protein inhibits trypsin activity and prophenoloxidase (PPO) activation, an enzyme essential for both clotting and insect innate immune responses. It does not inhibit activity of chymotrypsin and protease K, and has no effect on phenoloxidase (PO) activity. This chain is Small pacifastin protease inhibitor, found in Nasonia vitripennis (Parasitic wasp).